We begin with the raw amino-acid sequence, 163 residues long: RRM-domain-containing protein ECU01_0840 (163 aa).

Residues 84–163 (CSVKLSNLPL…SLGLSAEIAR (80 aa)) enclose the RRM domain.

The protein is RRM-domain-containing protein ECU01_0840 of Encephalitozoon cuniculi (strain GB-M1) (Microsporidian parasite).